A 240-amino-acid polypeptide reads, in one-letter code: 7-cyano-7-deazaguanine synthase (240 aa).

18–28 (FSGGQDSTTCL) provides a ligand contact to ATP. The Zn(2+) site is built by Cys197, Cys206, Cys209, and Cys212.

The protein belongs to the QueC family. The cofactor is Zn(2+).

It carries out the reaction 7-carboxy-7-deazaguanine + NH4(+) + ATP = 7-cyano-7-deazaguanine + ADP + phosphate + H2O + H(+). It participates in purine metabolism; 7-cyano-7-deazaguanine biosynthesis. In terms of biological role, catalyzes the ATP-dependent conversion of 7-carboxy-7-deazaguanine (CDG) to 7-cyano-7-deazaguanine (preQ(0)). This chain is 7-cyano-7-deazaguanine synthase, found in Shewanella putrefaciens (strain CN-32 / ATCC BAA-453).